The primary structure comprises 433 residues: MRNRTYTADAEPGDTVTVAGWVHEVRDLGGIAFLILRDTSGKIQVKFEKDEMDDDLVETGLGVHRESVISVTGEVDEEPRAPTGVEVTPESLDVIAEAEAQLPLDPSGKVDAELSTRLDNRTLDLRKDEVKAIFEIRAEVQRAVRDKFRDLRATEINTPKIVATGTEGGTELFPITYFGQEAFMNQSPQLFKQLMVGSGLERVFEVGPIFRAEEHNTPRHLNEATSIDFESAFIDHTEAMDVCEAVVTAAYEAVEENCQDELEALGLEEEFERRPRVPAAHLRGGHRAHQRTGELDEQLVWGDDLPTEGEKALGEDVGEHYFITDWPSEIKPFYIKDHDDDETLSTGFDMMHPNMELVSGGQREHRFDHLVAGFEQQGLDPDAFEYYTKMFKYGMPPHAGFGLGGERLIMTMLGLENIREAVLFPRDRQRLSP.

Glu167 is a binding site for L-aspartate. The aspartate stretch occupies residues 189–192 (QLFK). Arg211 lines the L-aspartate pocket. Residues 211-213 (RAE), 219-221 (RHL), and Glu356 contribute to the ATP site. Positions 356 and 359 each coordinate Mg(2+). The L-aspartate site is built by Ser359 and Arg363. 404–407 (GGER) serves as a coordination point for ATP.

The protein belongs to the class-II aminoacyl-tRNA synthetase family. Type 2 subfamily. In terms of assembly, homodimer. The cofactor is Mg(2+).

It localises to the cytoplasm. The enzyme catalyses tRNA(Asx) + L-aspartate + ATP = L-aspartyl-tRNA(Asx) + AMP + diphosphate. Its function is as follows. Aspartyl-tRNA synthetase with relaxed tRNA specificity since it is able to aspartylate not only its cognate tRNA(Asp) but also tRNA(Asn). Reaction proceeds in two steps: L-aspartate is first activated by ATP to form Asp-AMP and then transferred to the acceptor end of tRNA(Asp/Asn). The sequence is that of Aspartate--tRNA(Asp/Asn) ligase from Haloferax volcanii (Halobacterium volcanii).